We begin with the raw amino-acid sequence, 312 residues long: 6-hydroxy-3-succinoylpyridine 3-monooxygenase HspA (312 aa).

Residues 14-210 (IYIDGYNFYY…RSANTDLIKF (197 aa)) form the NYN domain.

The catalysed reaction is 4-(6-hydroxypyridin-3-yl)-4-oxobutanoate + 2 NADH + O2 + 2 H(+) = 2,5-dihydroxypyridine + succinate semialdehyde + 2 NAD(+) + H2O. It participates in alkaloid degradation; nicotine degradation. Functionally, involved in the nicotine degradation. Catalyzes the cleavage of 6-hydroxy-3-succinoylpyridine (HSP) by incorporation of oxygen at the 3-position to produce to 2,5-dihydroxypyridine (DHP) and succinic semialdehyde. The protein is 6-hydroxy-3-succinoylpyridine 3-monooxygenase HspA of Pseudomonas putida (strain DSM 28022 / S16).